Reading from the N-terminus, the 368-residue chain is tRNA-specific 2-thiouridylase MnmA (368 aa).

Residues 11–18 (GMSGGVDS) and methionine 37 contribute to the ATP site. The interaction with target base in tRNA stretch occupies residues 97-99 (NPD). Cysteine 102 (nucleophile) is an active-site residue. Cysteine 102 and cysteine 199 are oxidised to a cystine. Position 127 (glycine 127) interacts with ATP. The interval 149-151 (KDQ) is interaction with tRNA. Cysteine 199 functions as the Cysteine persulfide intermediate in the catalytic mechanism. Residues 311-312 (RY) form an interaction with tRNA region.

This sequence belongs to the MnmA/TRMU family. In terms of assembly, interacts with TusE.

Its subcellular location is the cytoplasm. It carries out the reaction S-sulfanyl-L-cysteinyl-[protein] + uridine(34) in tRNA + AH2 + ATP = 2-thiouridine(34) in tRNA + L-cysteinyl-[protein] + A + AMP + diphosphate + H(+). Catalyzes the 2-thiolation of uridine at the wobble position (U34) of tRNA(Lys), tRNA(Glu) and tRNA(Gln), leading to the formation of s(2)U34, the first step of tRNA-mnm(5)s(2)U34 synthesis. Sulfur is provided by IscS, via a sulfur-relay system. Binds ATP and its substrate tRNAs. The sequence is that of tRNA-specific 2-thiouridylase MnmA from Escherichia coli O1:K1 / APEC.